The sequence spans 362 residues: MTQEGKRILVMAGGTGGHVFPALAVAKYLAQQGWQVRWLGTADRMEARLVPQYGFDIDFIDIKGVRGNGLVRKLAAPFKVIRSILQAKAVIAEFKPDVVLGMGGFASGPGGVAARLAGIPLVLHEQNAIPGMTNKLLSRIATQVLCAFKNTFTTVKSKVVGNPIRRELIALGAEPKPLADDALKVLVVGGSLGAKIFNDLMPSVVAALSKQQSITVWHQVGKDNLAGVKAAYQQQGQEGGVNIAEFIDDMEAAYRWADVVLCRAGALTVSELAAVGLPSILVPYPHAVDDHQTRNGQVLVEAGAAFLLPQAILDVDKLVGKLQLLANDRTELARMGQRARDVAVLDATEQVAAVCISLAEKG.

Residues 15–17 (TGG), Asn127, Arg165, Ser191, Ile247, 266–271 (ALTVSE), and Gln292 each bind UDP-N-acetyl-alpha-D-glucosamine.

It belongs to the glycosyltransferase 28 family. MurG subfamily.

The protein resides in the cell inner membrane. The catalysed reaction is di-trans,octa-cis-undecaprenyl diphospho-N-acetyl-alpha-D-muramoyl-L-alanyl-D-glutamyl-meso-2,6-diaminopimeloyl-D-alanyl-D-alanine + UDP-N-acetyl-alpha-D-glucosamine = di-trans,octa-cis-undecaprenyl diphospho-[N-acetyl-alpha-D-glucosaminyl-(1-&gt;4)]-N-acetyl-alpha-D-muramoyl-L-alanyl-D-glutamyl-meso-2,6-diaminopimeloyl-D-alanyl-D-alanine + UDP + H(+). It participates in cell wall biogenesis; peptidoglycan biosynthesis. Cell wall formation. Catalyzes the transfer of a GlcNAc subunit on undecaprenyl-pyrophosphoryl-MurNAc-pentapeptide (lipid intermediate I) to form undecaprenyl-pyrophosphoryl-MurNAc-(pentapeptide)GlcNAc (lipid intermediate II). This chain is UDP-N-acetylglucosamine--N-acetylmuramyl-(pentapeptide) pyrophosphoryl-undecaprenol N-acetylglucosamine transferase, found in Shewanella putrefaciens (strain CN-32 / ATCC BAA-453).